The following is a 32-amino-acid chain: uncharacterized protein (32 aa).

This is an uncharacterized protein from Gallus gallus (Chicken).